The chain runs to 415 residues: Histidine--tRNA ligase (415 aa).

The protein belongs to the class-II aminoacyl-tRNA synthetase family. In terms of assembly, homodimer.

It is found in the cytoplasm. It carries out the reaction tRNA(His) + L-histidine + ATP = L-histidyl-tRNA(His) + AMP + diphosphate + H(+). The polypeptide is Histidine--tRNA ligase (Phytoplasma australiense).